The sequence spans 160 residues: uncharacterized protein (160 aa).

The signal sequence occupies residues 1–27 (MVIGRKAGIIIYVMHALLLLLLSFTFA).

This is an uncharacterized protein from Aquifex aeolicus (strain VF5).